The following is a 224-amino-acid chain: Lipoprotein-releasing system ATP-binding protein LolD (224 aa).

Residues 5–224 enclose the ABC transporter domain; it reads LRAENIKKVI…GKVVGEITRV (220 aa). An ATP-binding site is contributed by 37–44; that stretch reads GASGSGKS.

It belongs to the ABC transporter superfamily. Lipoprotein translocase (TC 3.A.1.125) family. The complex is composed of two ATP-binding proteins (LolD) and two transmembrane proteins (LolC and LolE).

The protein resides in the cell inner membrane. Its function is as follows. Part of the ABC transporter complex LolCDE involved in the translocation of mature outer membrane-directed lipoproteins, from the inner membrane to the periplasmic chaperone, LolA. Responsible for the formation of the LolA-lipoprotein complex in an ATP-dependent manner. In Aquifex aeolicus (strain VF5), this protein is Lipoprotein-releasing system ATP-binding protein LolD.